The chain runs to 310 residues: Methionyl-tRNA formyltransferase (310 aa).

109 to 112 (SLLP) is a (6S)-5,6,7,8-tetrahydrofolate binding site.

The protein belongs to the Fmt family.

The enzyme catalyses L-methionyl-tRNA(fMet) + (6R)-10-formyltetrahydrofolate = N-formyl-L-methionyl-tRNA(fMet) + (6S)-5,6,7,8-tetrahydrofolate + H(+). In terms of biological role, attaches a formyl group to the free amino group of methionyl-tRNA(fMet). The formyl group appears to play a dual role in the initiator identity of N-formylmethionyl-tRNA by promoting its recognition by IF2 and preventing the misappropriation of this tRNA by the elongation apparatus. This is Methionyl-tRNA formyltransferase from Alkaliphilus oremlandii (strain OhILAs) (Clostridium oremlandii (strain OhILAs)).